The sequence spans 274 residues: 3-methyl-2-oxobutanoate hydroxymethyltransferase (274 aa).

Mg(2+) is bound by residues Asp49 and Asp88. 3-methyl-2-oxobutanoate contacts are provided by residues 49–50 (DS), Asp88, and Lys118. Glu120 lines the Mg(2+) pocket. The active-site Proton acceptor is the Glu187.

The protein belongs to the PanB family. In terms of assembly, homodecamer; pentamer of dimers. Mg(2+) serves as cofactor.

It localises to the cytoplasm. It catalyses the reaction 3-methyl-2-oxobutanoate + (6R)-5,10-methylene-5,6,7,8-tetrahydrofolate + H2O = 2-dehydropantoate + (6S)-5,6,7,8-tetrahydrofolate. It participates in cofactor biosynthesis; (R)-pantothenate biosynthesis; (R)-pantoate from 3-methyl-2-oxobutanoate: step 1/2. Catalyzes the reversible reaction in which hydroxymethyl group from 5,10-methylenetetrahydrofolate is transferred onto alpha-ketoisovalerate to form ketopantoate. This Rhodopseudomonas palustris (strain ATCC BAA-98 / CGA009) protein is 3-methyl-2-oxobutanoate hydroxymethyltransferase.